Consider the following 448-residue polypeptide: MKIYNTYSRQLEDFQPIEPGKVKMYVCGPTVYNYIHVGNARSVVAFDLVRKYLEFRGFEVEYISNFTDVDDKIIKAAASENISTKELSERYIAAFYEDTDLLNVKRASQNPKATEFIEAMIDFIQELLDKDYAYISEGDVYFRVAKSKDYAKLANKNLADLLAGASGRTDEETNLKESPADFALWKSVKADEVSWQAPWGAGRPGWHIECSVMSTSLLGETIDIHGGGADLEFPHHTNEIAQSEAKTGQKFVNYWMHNGFVNVDGEKMSKSLGNFTTVHELLQVVDPQILRFFLTTTHYRRPLNFTDDALTEAENNIKKIENAYRHLDDQAESNLSALTTFRNDFVAAMDEDFNIANGMTVFYDFVSWVNKGNGGAEVKAFFDQVLEILGIKFEIEQSLDSEIEAMIEERQLAREVRDFAKSDEIRDALKAQGIVLEDTKDGVRWHRE.

Cys27 is a Zn(2+) binding site. Positions 29 to 39 (PTVYNYIHVGN) match the 'HIGH' region motif. 3 residues coordinate Zn(2+): Cys210, His235, and Glu239. Positions 267–271 (KMSKS) match the 'KMSKS' region motif. Lys270 contributes to the ATP binding site.

The protein belongs to the class-I aminoacyl-tRNA synthetase family. In terms of assembly, monomer. It depends on Zn(2+) as a cofactor.

The protein resides in the cytoplasm. It catalyses the reaction tRNA(Cys) + L-cysteine + ATP = L-cysteinyl-tRNA(Cys) + AMP + diphosphate. This Lactococcus lactis subsp. cremoris (strain MG1363) protein is Cysteine--tRNA ligase.